Consider the following 446-residue polypeptide: Sensor-type histidine kinase PrrB (446 aa).

2 helical membrane-spanning segments follow: residues 19 to 39 (VVATAIGAAIPVLIVGTVVWV) and 151 to 171 (LLICGFAIAAAAVFAWLLAAF). The HAMP domain maps to 172 to 222 (AVRPFKQLAQQTRSVDAGGEAPRVEVHGATEAVEIAEAMRGMLQRIWNEQN). The region spanning 237 to 446 (VSSHELRTPL…RLLLRISAPS (210 aa)) is the Histidine kinase domain. Phosphohistidine; by autocatalysis is present on His240.

In terms of processing, autophosphorylated.

The protein resides in the cell membrane. It catalyses the reaction ATP + protein L-histidine = ADP + protein N-phospho-L-histidine.. Functionally, member of the two-component regulatory system PrrB/PrrA that is involved specifically in early intracellular multiplication of Mycobacterium and is essential for its viability. Functions as a sensor protein kinase which is autophosphorylated at a histidine residue and transfers its phosphate group to the conserved aspartic acid residue in the regulatory domain of PrrA. In turn, PrrA binds to the upstream promoter regions of target genes including itself to positively regulate their expression. The sequence is that of Sensor-type histidine kinase PrrB (prrB) from Mycobacterium leprae (strain TN).